Here is a 281-residue protein sequence, read N- to C-terminus: uncharacterized protein (281 aa).

Residues 242 to 281 (IDKQSRKKNIIREINDIKSKINDLSNYMDNLISELDDLFD) are a coiled coil.

This is an uncharacterized protein from Acanthamoeba polyphaga (Amoeba).